The chain runs to 1024 residues: Beta-galactosidase (1024 aa).

Residues Asn103 and Asp202 each coordinate substrate. Asp202 contributes to the Na(+) binding site. Glu417, His419, and Glu462 together coordinate Mg(2+). Residues Glu462 and 538-541 (EYAH) contribute to the substrate site. Glu462 acts as the Proton donor in catalysis. Catalysis depends on Glu538, which acts as the Nucleophile. Asn598 contacts Mg(2+). Na(+) is bound by residues Phe602 and Asn605. Asn605 and Trp1000 together coordinate substrate.

It belongs to the glycosyl hydrolase 2 family. Homotetramer. The cofactor is Mg(2+). It depends on Na(+) as a cofactor.

The catalysed reaction is Hydrolysis of terminal non-reducing beta-D-galactose residues in beta-D-galactosides.. The sequence is that of Beta-galactosidase from Shigella dysenteriae serotype 1 (strain Sd197).